A 326-amino-acid chain; its full sequence is Nuclear egress protein 1 (326 aa).

The segment at 115–244 (CLSLSGMGYY…YAVFPTKSVH (130 aa)) adopts a CCCH-type zinc-finger fold.

Belongs to the herpesviridae NEC1 protein family. Forms a heterohexameric complex with NEC2. Interacts with capsid vertex specific component 2/CVC2; this interaction directs the capsid to the host inner nuclear membrane to initiate budding. In terms of processing, phosphorylated at serine residues in the N-terminus. This phosphorylation regulates the localization within the inner nuclear membrane.

The protein localises to the host nucleus inner membrane. Functionally, plays an essential role in virion nuclear egress, the first step of virion release from infected cell. Within the host nucleus, NEC1 interacts with the newly formed capsid through the vertexes and directs it to the inner nuclear membrane by associating with NEC2. Induces the budding of the capsid at the inner nuclear membrane as well as its envelopment into the perinuclear space. There, the NEC1/NEC2 complex promotes the fusion of the enveloped capsid with the outer nuclear membrane and the subsequent release of the viral capsid into the cytoplasm where it will reach the secondary budding sites in the host Golgi or trans-Golgi network. In Equine herpesvirus 1 (strain Ab4p) (EHV-1), this protein is Nuclear egress protein 1.